The following is a 504-amino-acid chain: Glucose-6-phosphate isomerase (504 aa).

Residue E333 is the Proton donor of the active site. Residues H364 and K473 contribute to the active site.

This sequence belongs to the GPI family.

Its subcellular location is the cytoplasm. It catalyses the reaction alpha-D-glucose 6-phosphate = beta-D-fructose 6-phosphate. It participates in carbohydrate biosynthesis; gluconeogenesis. The protein operates within carbohydrate degradation; glycolysis; D-glyceraldehyde 3-phosphate and glycerone phosphate from D-glucose: step 2/4. Its function is as follows. Catalyzes the reversible isomerization of glucose-6-phosphate to fructose-6-phosphate. The polypeptide is Glucose-6-phosphate isomerase (Xanthomonas euvesicatoria pv. vesicatoria (strain 85-10) (Xanthomonas campestris pv. vesicatoria)).